A 491-amino-acid polypeptide reads, in one-letter code: D-xylose-proton symporter (491 aa).

At 1–9 the chain is on the cytoplasmic side; the sequence is MNTQYNSSY. Residues 10–30 form a helical membrane-spanning segment; it reads IFSITLVATLGGLLFGYDTAV. Topologically, residues 31–55 are periplasmic; the sequence is ISGTVESLNTVFVAPQNLSESAANS. The helical transmembrane segment at 56–76 threads the bilayer; sequence LLGFCVASALIGCIIGGALGG. At 77-89 the chain is on the cytoplasmic side; that stretch reads YCSNRFGRRDSLK. A helical membrane pass occupies residues 90–110; it reads IAAVLFFISGVGSAWPELGFT. Residues 111 to 133 lie on the Periplasmic side of the membrane; sequence SINPDNTVPVYLAGYVPEFVIYR. The chain crosses the membrane as a helical span at residues 134 to 154; the sequence is IIGGIGVGLASMLSPMYIAEL. The Cytoplasmic portion of the chain corresponds to 155–165; it reads APAHIRGKLVS. Residues 166–186 traverse the membrane as a helical segment; it reads FNQFAIIFGQLLVYCVNYFIA. Position 168 (Gln-168) interacts with beta-D-xylose. Residues 187 to 200 are Periplasmic-facing; that stretch reads RSGDASWLNTDGWR. A helical transmembrane segment spans residues 201 to 221; sequence YMFASECIPALLFLMLLYTVP. Topologically, residues 222–272 are cytoplasmic; that stretch reads ESPRWLMSRGKQEQAEGILRKIMGNTLATQAVQEIKHSLDHGRKTGGRLLM. The helical transmembrane segment at 273–293 threads the bilayer; it reads FGVGVIVIGVMLSIFQQFVGI. Beta-D-xylose is bound by residues 288 to 289 and Asn-294; that span reads QQ. At 294–312 the chain is on the periplasmic side; sequence NVVLYYAPEVFKTLGASTD. Residues 313-333 traverse the membrane as a helical segment; sequence IALLQTIIVGVINLTFTVLAI. At 334-343 the chain is on the cytoplasmic side; it reads MTVDKFGRKP. A helical membrane pass occupies residues 344 to 364; that stretch reads LQIIGALGMAIGMFSLGTAFY. At 365–369 the chain is on the periplasmic side; the sequence is TQAPG. A helical membrane pass occupies residues 370 to 390; the sequence is IVALLSMLFYVAAFAMSWGPV. The Cytoplasmic segment spans residues 391–407; it reads CWVLLSEIFPNAIRGKA. Residues Trp-392 and Gln-415 each contribute to the beta-D-xylose site. The chain crosses the membrane as a helical span at residues 408–428; that stretch reads LAIAVAAQWLANYFVSWTFPM. The Periplasmic segment spans residues 429 to 442; sequence MDKNSWLVAHFHNG. Residues 443–463 traverse the membrane as a helical segment; sequence FSYWIYGCMGVLAALFMWKFV. At 464–491 the chain is on the cytoplasmic side; that stretch reads PETKGKTLEELEALWEPETKKTQQTATL.

Belongs to the major facilitator superfamily. Sugar transporter (TC 2.A.1.1) family.

Its subcellular location is the cell inner membrane. It catalyses the reaction D-xylose(in) + H(+)(in) = D-xylose(out) + H(+)(out). In terms of biological role, uptake of D-xylose across the boundary membrane with the concomitant transport of protons into the cell (symport system). This chain is D-xylose-proton symporter (xylE), found in Escherichia coli O157:H7.